Here is a 113-residue protein sequence, read N- to C-terminus: Putative pterin-4-alpha-carbinolamine dehydratase (113 aa).

Belongs to the pterin-4-alpha-carbinolamine dehydratase family.

The enzyme catalyses (4aS,6R)-4a-hydroxy-L-erythro-5,6,7,8-tetrahydrobiopterin = (6R)-L-erythro-6,7-dihydrobiopterin + H2O. In Nitrosococcus oceani (strain ATCC 19707 / BCRC 17464 / JCM 30415 / NCIMB 11848 / C-107), this protein is Putative pterin-4-alpha-carbinolamine dehydratase.